Reading from the N-terminus, the 208-residue chain is MGGTFDPIHHGHLVAASEVAARFALDEVVFVPTGKPWQKSRVDIAPAEHRYLMTVIATASNPRFTVSRIDIDRGGFTYTIDTLRELRDLRPEADLFFITGADALAQILQWKDVAELWSLAHFVGVSRPGHALTDDGLPLDGVSLMEVPALSISSTDCRQRVAEGLPVWYLVPDGVVQHISKHRLYTAPEHGRLLDARGEALAVGESGD.

The protein belongs to the NadD family.

It catalyses the reaction nicotinate beta-D-ribonucleotide + ATP + H(+) = deamido-NAD(+) + diphosphate. It participates in cofactor biosynthesis; NAD(+) biosynthesis; deamido-NAD(+) from nicotinate D-ribonucleotide: step 1/1. Functionally, catalyzes the reversible adenylation of nicotinate mononucleotide (NaMN) to nicotinic acid adenine dinucleotide (NaAD). The sequence is that of Probable nicotinate-nucleotide adenylyltransferase from Kineococcus radiotolerans (strain ATCC BAA-149 / DSM 14245 / SRS30216).